The sequence spans 466 residues: Pyruvate kinase (466 aa).

Position 32 (R32) interacts with substrate. Residues N34, S36, and D66 each contribute to the K(+) site. 34–37 (NTSH) contributes to the ATP binding site. Residue R73 coordinates ATP. E219 lines the Mg(2+) pocket. Substrate-binding residues include G242, D243, and T275. D243 is a binding site for Mg(2+).

Belongs to the pyruvate kinase family. In terms of assembly, homotetramer. Requires a divalent metal cation as cofactor.

It catalyses the reaction pyruvate + ATP = phosphoenolpyruvate + ADP + H(+). It participates in carbohydrate degradation; glycolysis; pyruvate from D-glyceraldehyde 3-phosphate: step 5/5. With respect to regulation, allosterically activated by AMP and inhibited by ATP. This Thermotoga maritima (strain ATCC 43589 / DSM 3109 / JCM 10099 / NBRC 100826 / MSB8) protein is Pyruvate kinase (pyk).